Reading from the N-terminus, the 235-residue chain is Regulator of G-protein signaling 18 (235 aa).

S49 bears the Phosphoserine mark. The RGS domain occupies 86–202; it reads SFDKLLSHRD…LKSDIYLDLM (117 aa). S216 and S218 each carry phosphoserine.

As to expression, expressed in peripheral leukocytes, bone marrow, platelet, spleen and fetal liver.

The protein resides in the cytoplasm. In terms of biological role, inhibits signal transduction by increasing the GTPase activity of G protein alpha subunits thereby driving them into their inactive GDP-bound form. Binds to G(i) alpha-1, G(i) alpha-2, G(i) alpha-3 and G(q) alpha. In Homo sapiens (Human), this protein is Regulator of G-protein signaling 18 (RGS18).